The following is a 163-amino-acid chain: Phosphopantetheine adenylyltransferase (163 aa).

Serine 9 is a substrate binding site. ATP is bound by residues 9–10 (SF) and histidine 17. Substrate-binding residues include lysine 41, threonine 73, and arginine 87. Residues 88–90 (GLR), glutamate 98, and 123–129 (YAYFSSS) each bind ATP.

This sequence belongs to the bacterial CoaD family. As to quaternary structure, homohexamer. Mg(2+) is required as a cofactor.

Its subcellular location is the cytoplasm. It catalyses the reaction (R)-4'-phosphopantetheine + ATP + H(+) = 3'-dephospho-CoA + diphosphate. The protein operates within cofactor biosynthesis; coenzyme A biosynthesis; CoA from (R)-pantothenate: step 4/5. Its function is as follows. Reversibly transfers an adenylyl group from ATP to 4'-phosphopantetheine, yielding dephospho-CoA (dPCoA) and pyrophosphate. The chain is Phosphopantetheine adenylyltransferase from Lactiplantibacillus plantarum (strain ATCC BAA-793 / NCIMB 8826 / WCFS1) (Lactobacillus plantarum).